Here is a 436-residue protein sequence, read N- to C-terminus: Homeobox protein PKNOX1 (436 aa).

The span at M1–V20 shows a compositional bias: polar residues. The tract at residues M1 to T49 is disordered. Phosphoserine is present on residues S33 and S41. One can recognise an MEIS N-terminal domain in the interval G80 to E163. Residues S259–M321 constitute a DNA-binding region (homeobox; TALE-type). Positions A401–Q436 are disordered. A compositionally biased stretch (acidic residues) spans S404–A416.

Belongs to the TALE/MEIS homeobox family. Interacts with MN1. As to expression, ubiquitous. Isoform 2 is expressed in all examined tissues except in bone marrow.

The protein localises to the nucleus. In terms of biological role, activates transcription in the presence of PBX1A and HOXA1. This is Homeobox protein PKNOX1 from Homo sapiens (Human).